Consider the following 108-residue polypeptide: MASAVGKGVTAFNTIKNIISELKKVDKTFSPNSAQYKYLMEQMKADQVTTRRYSKAENESESVAKLYLSYIKGTRQLNELQERYKGGEKSVEEAAAIVGLKLPEQKKL.

Belongs to the FMC1 family.

This chain is Protein FMC1 homolog, found in Caenorhabditis elegans.